Here is a 357-residue protein sequence, read N- to C-terminus: Homoserine kinase (357 aa).

Lysine 133 is covalently cross-linked (Glycyl lysine isopeptide (Lys-Gly) (interchain with G-Cter in ubiquitin)).

Belongs to the GHMP kinase family. Homoserine kinase subfamily. Homodimer.

The enzyme catalyses L-homoserine + ATP = O-phospho-L-homoserine + ADP + H(+). It participates in amino-acid biosynthesis; L-threonine biosynthesis; L-threonine from L-aspartate: step 4/5. Its function is as follows. Commits homoserine to the threonine biosynthesis pathway by catalyzing its O-phosphorylation. The sequence is that of Homoserine kinase (THR1) from Saccharomyces cerevisiae (strain ATCC 204508 / S288c) (Baker's yeast).